Reading from the N-terminus, the 124-residue chain is Large-conductance mechanosensitive channel (124 aa).

2 helical membrane-spanning segments follow: residues 15–35 (MDLAVGVIIGAAFTAIVNSLV) and 67–87 (GSFLNAVINFLIIALVVFFLI).

The protein belongs to the MscL family. As to quaternary structure, homopentamer.

It is found in the cell membrane. In terms of biological role, channel that opens in response to stretch forces in the membrane lipid bilayer. May participate in the regulation of osmotic pressure changes within the cell. The polypeptide is Large-conductance mechanosensitive channel (Lactobacillus johnsonii (strain CNCM I-12250 / La1 / NCC 533)).